The following is a 488-amino-acid chain: Ammonium transporter Rh type C-like 2 (488 aa).

The Cytoplasmic segment spans residues 1 to 21; it reads MGNCFGSRGICDRPKNTNIRL. The helical transmembrane segment at 22-42 threads the bilayer; sequence SLPAVCFVWQVSMIILFGVFV. The Extracellular portion of the chain corresponds to 43–73; it reads RYNEEADTNWVYTKKEKNITSDIENDFYFRY. Asn60 is a glycosylation site (N-linked (GlcNAc...) asparagine). The helical transmembrane segment at 74-94 threads the bilayer; the sequence is PSFQDVHVMIFVGFGFLMTFL. The Cytoplasmic portion of the chain corresponds to 95-98; sequence KRYS. The helical transmembrane segment at 99–119 threads the bilayer; that stretch reads FGAVGFNFLIAAFGLQWALLM. Residues 120–139 lie on the Extracellular side of the membrane; the sequence is QGWFSPLGDDGKIKIGIENL. Residues 140–160 traverse the membrane as a helical segment; it reads INADFCVASCLIAYGAVLGKV. The Cytoplasmic segment spans residues 161-162; sequence SP. The chain crosses the membrane as a helical span at residues 163 to 183; the sequence is VQLLVMTLFGITLYAVEEFII. The Extracellular segment spans residues 184–191; sequence LRVLNAKD. A helical membrane pass occupies residues 192-214; the sequence is AGGSMVIHTFGAYYGLSISRVLY. Over 215-232 the chain is Cytoplasmic; it reads RPNLNKSKHMNGSVYHSD. A helical membrane pass occupies residues 233-253; it reads VFAMIGTLFLWMFWPSFNSAI. Residues 254-264 lie on the Extracellular side of the membrane; that stretch reads CNHGDGQHRAA. The helical transmembrane segment at 265–285 threads the bilayer; it reads INTYLALASTVLTTVAISSMF. Residues 286-298 are Cytoplasmic-facing; the sequence is EKTGKLDMVHIQN. A helical membrane pass occupies residues 299-319; that stretch reads STLAGGVAVGTAAEFMLMPYG. A topological domain (extracellular) is located at residue Ser320. A helical transmembrane segment spans residues 321 to 341; that stretch reads LIVGFFCGIISTLGYIYLTPF. Topologically, residues 342-356 are cytoplasmic; the sequence is LEERLKIQDTCGIHN. A helical membrane pass occupies residues 357–377; the sequence is LHAMPGVIGGIVGAISAAAAS. At 378–409 the chain is on the extracellular side; it reads KEVYGDLGLKNIFSIEGSNVTRLPTVQGGYQA. A helical membrane pass occupies residues 410–430; that stretch reads AALCVALCFGIGGGTFVGLVL. The Cytoplasmic segment spans residues 431–488; that stretch reads KLPIWGDPADEHCFNDEMYWEVPEDEESIIPPVLSYNNHMIPNNKHEEMRETNFAEQS.

This sequence belongs to the ammonium transporter (TC 2.A.49) family. Rh subfamily. As to quaternary structure, homotrimer. As to expression, at larval stages, expressed only in the yolk sac and gill. However, the kidney and the gills are major sites of expression in adults.

It is found in the apical cell membrane. In terms of biological role, functions as an ammonia transporter. May play a role in the elimination of ammonia in the gill. The chain is Ammonium transporter Rh type C-like 2 (rhcgl2) from Danio rerio (Zebrafish).